A 239-amino-acid chain; its full sequence is Carboxy-S-adenosyl-L-methionine synthase (239 aa).

Residues Tyr-35, Gly-64–Ser-66, Asp-88–Asn-89, and Arg-195 each bind S-adenosyl-L-methionine.

It belongs to the class I-like SAM-binding methyltransferase superfamily. Cx-SAM synthase family. Homodimer.

The enzyme catalyses prephenate + S-adenosyl-L-methionine = carboxy-S-adenosyl-L-methionine + 3-phenylpyruvate + H2O. Catalyzes the conversion of S-adenosyl-L-methionine (SAM) to carboxy-S-adenosyl-L-methionine (Cx-SAM). The protein is Carboxy-S-adenosyl-L-methionine synthase of Helicobacter pylori (strain G27).